An 88-amino-acid chain; its full sequence is Small ribosomal subunit protein bS18 (88 aa).

The segment at M1–V22 is disordered.

This sequence belongs to the bacterial ribosomal protein bS18 family. As to quaternary structure, part of the 30S ribosomal subunit. Forms a tight heterodimer with protein bS6.

In terms of biological role, binds as a heterodimer with protein bS6 to the central domain of the 16S rRNA, where it helps stabilize the platform of the 30S subunit. The protein is Small ribosomal subunit protein bS18 (rpsR) of Thermus thermophilus (strain ATCC BAA-163 / DSM 7039 / HB27).